The primary structure comprises 144 residues: Large ribosomal subunit protein uL16 (144 aa).

Belongs to the universal ribosomal protein uL16 family. As to quaternary structure, part of the 50S ribosomal subunit.

Binds 23S rRNA and is also seen to make contacts with the A and possibly P site tRNAs. This is Large ribosomal subunit protein uL16 from Caldanaerobacter subterraneus subsp. tengcongensis (strain DSM 15242 / JCM 11007 / NBRC 100824 / MB4) (Thermoanaerobacter tengcongensis).